Reading from the N-terminus, the 426-residue chain is Enolase (426 aa).

(2R)-2-phosphoglycerate is bound at residue Gln163. Catalysis depends on Glu205, which acts as the Proton donor. Asp242, Glu286, and Asp313 together coordinate Mg(2+). Residues Lys338, Arg367, Ser368, and Lys389 each contribute to the (2R)-2-phosphoglycerate site. Lys338 serves as the catalytic Proton acceptor.

It belongs to the enolase family. Mg(2+) serves as cofactor.

Its subcellular location is the cytoplasm. The protein localises to the secreted. The protein resides in the cell surface. It carries out the reaction (2R)-2-phosphoglycerate = phosphoenolpyruvate + H2O. The protein operates within carbohydrate degradation; glycolysis; pyruvate from D-glyceraldehyde 3-phosphate: step 4/5. In terms of biological role, catalyzes the reversible conversion of 2-phosphoglycerate (2-PG) into phosphoenolpyruvate (PEP). It is essential for the degradation of carbohydrates via glycolysis. The protein is Enolase of Syntrophobacter fumaroxidans (strain DSM 10017 / MPOB).